We begin with the raw amino-acid sequence, 82 residues long: Exodeoxyribonuclease 7 small subunit (82 aa).

This sequence belongs to the XseB family. Heterooligomer composed of large and small subunits.

It is found in the cytoplasm. The catalysed reaction is Exonucleolytic cleavage in either 5'- to 3'- or 3'- to 5'-direction to yield nucleoside 5'-phosphates.. Bidirectionally degrades single-stranded DNA into large acid-insoluble oligonucleotides, which are then degraded further into small acid-soluble oligonucleotides. This Mannheimia succiniciproducens (strain KCTC 0769BP / MBEL55E) protein is Exodeoxyribonuclease 7 small subunit.